We begin with the raw amino-acid sequence, 860 residues long: Leucine--tRNA ligase (860 aa).

Positions 42 to 52 (PYPSGRLHMGH) match the 'HIGH' region motif. The short motif at 619–623 (KMSKS) is the 'KMSKS' region element. Lys-622 contributes to the ATP binding site.

It belongs to the class-I aminoacyl-tRNA synthetase family.

The protein localises to the cytoplasm. The enzyme catalyses tRNA(Leu) + L-leucine + ATP = L-leucyl-tRNA(Leu) + AMP + diphosphate. The sequence is that of Leucine--tRNA ligase from Salmonella paratyphi B (strain ATCC BAA-1250 / SPB7).